A 378-amino-acid chain; its full sequence is Formate dehydrogenase 2, mitochondrial (378 aa).

Residues 1-18 constitute a mitochondrion transit peptide; the sequence is MAMWRAPSAAGQLLGRAL. The substrate site is built by Val-122 and Asn-146. NAD(+)-binding positions include Thr-147, 201–202, Asp-221, 256–260, Asn-282, Asp-308, and 332–335; these read RI, PLTEK, and HCSG.

It belongs to the D-isomer specific 2-hydroxyacid dehydrogenase family. FDH subfamily. As to quaternary structure, homodimer.

The protein resides in the mitochondrion. It carries out the reaction formate + NAD(+) = CO2 + NADH. Catalyzes the NAD(+)-dependent oxidation of formate to carbon dioxide. Involved in the cell stress response. This is Formate dehydrogenase 2, mitochondrial from Oryza sativa subsp. japonica (Rice).